Reading from the N-terminus, the 729-residue chain is Fatty acid oxidation complex subunit alpha (729 aa).

The interval 1–189 is enoyl-CoA hydratase/isomerase; that stretch reads MLYKGDTLYL…KIGLVDGVVK (189 aa). Position 296 (Asp296) interacts with substrate. Residues 311-729 form a 3-hydroxyacyl-CoA dehydrogenase region; that stretch reads ETPKQAAVLG…ARPVGSLKTA (419 aa). Residues Met324, Asp343, 400 to 402, Lys407, and Ser429 contribute to the NAD(+) site; that span reads VVE. The For 3-hydroxyacyl-CoA dehydrogenase activity role is filled by His450. Asn453 is an NAD(+) binding site. Substrate contacts are provided by Asn500 and Tyr660. Residues 708 to 729 form a disordered region; sequence RHNEPYYPPVEPARPVGSLKTA.

In the N-terminal section; belongs to the enoyl-CoA hydratase/isomerase family. The protein in the C-terminal section; belongs to the 3-hydroxyacyl-CoA dehydrogenase family. In terms of assembly, heterotetramer of two alpha chains (FadB) and two beta chains (FadA).

The catalysed reaction is a (3S)-3-hydroxyacyl-CoA + NAD(+) = a 3-oxoacyl-CoA + NADH + H(+). The enzyme catalyses a (3S)-3-hydroxyacyl-CoA = a (2E)-enoyl-CoA + H2O. It carries out the reaction a 4-saturated-(3S)-3-hydroxyacyl-CoA = a (3E)-enoyl-CoA + H2O. It catalyses the reaction (3S)-3-hydroxybutanoyl-CoA = (3R)-3-hydroxybutanoyl-CoA. The catalysed reaction is a (3Z)-enoyl-CoA = a 4-saturated (2E)-enoyl-CoA. The enzyme catalyses a (3E)-enoyl-CoA = a 4-saturated (2E)-enoyl-CoA. It functions in the pathway lipid metabolism; fatty acid beta-oxidation. Its function is as follows. Involved in the aerobic and anaerobic degradation of long-chain fatty acids via beta-oxidation cycle. Catalyzes the formation of 3-oxoacyl-CoA from enoyl-CoA via L-3-hydroxyacyl-CoA. It can also use D-3-hydroxyacyl-CoA and cis-3-enoyl-CoA as substrate. The sequence is that of Fatty acid oxidation complex subunit alpha from Salmonella newport (strain SL254).